A 3302-amino-acid chain; its full sequence is Xin actin-binding repeat-containing protein 2 (3302 aa).

A disordered region spans residues 166–204 (NDSEETLKPSSAMGTSSYTSARQSKETSTSSYSNHSLTS). Positions 173-187 (KPSSAMGTSSYTSAR) are enriched in polar residues. A compositionally biased stretch (low complexity) spans 191–204 (ETSTSSYSNHSLTS). Xin repeat units lie at residues 306 to 321 (AGVQQARYVFENTNDS), 341 to 356 (GEVQSIRWIFENQPLD), 381 to 396 (GDVKYTTWMFETQPID), 418 to 433 (GDVCTARWMFETRPLD), 456 to 471 (GDVKTVRYMFETQQLD), 496 to 511 (GNVKRSIKCFETQPLY), and 534 to 549 (GDVRTARWMFETQPLD). Phosphoserine is present on S565. 2 Xin repeats span residues 572–587 (GEVGRARWLFETQPLE) and 606–621 (IDVSKKCWMFETQPLD). S633 is modified (phosphoserine). Xin repeat units lie at residues 640–655 (GDVKTTKHLLETLPIE), 677–692 (GDVKHQKWVFETQRLE), 713–728 (GHVKNYTHIFESNNLI), 744–759 (GTVELNKSLFETTPLY), and 782–797 (GDVRSCRWLFETRPID). S813 is modified (phosphoserine). 11 Xin repeats span residues 820–835 (GNVKSARWLFETQPLD), 859–874 (GDVKTCKWLFETQPME), 892–907 (GDVRTCMWLFETQPLD), 930–945 (GDVRTACLLFETENLD), 965–980 (GDVSGMKYKFENQSLD), 1004–1019 (GNVLNCRWLFENQPID), 1040–1055 (GDVRKGCFIFETFSLD), 1077–1092 (GDVKSYKMLFETQPLY), 1115–1130 (GDVRGTRWLFETKPLD), 1152–1167 (GDVSSVRYRFETQPLD), and 1186–1201 (GNVQMNKQLFESEGGD). Position 1210 is a phosphoserine (S1210). Xin repeat units lie at residues 1217 to 1232 (GNVKTSTWLFETHSID), 1254 to 1269 (GDVKQAVWLFENQTLD), and 1289 to 1304 (SDVKTTTWLFETTPIH). The residue at position 1573 (S1573) is a Phosphoserine. Disordered regions lie at residues 1848–1882 (VSASMSRKKSLKTKESENVRESKDDVSSTQSVDKT), 1920–1939 (AETQSYRPDPTQHPVSNPAG), 1957–2002 (EKQN…APDK), 2039–2296 (YPDC…KPYM), 2311–2378 (RQQR…SKAV), 2546–2593 (YAAK…ESRV), and 2626–2687 (NFQQ…RESQ). Over residues 1859–1873 (KTKESENVRESKDDV) the composition is skewed to basic and acidic residues. Position 1930 is a phosphothreonine (T1930). Phosphoserine is present on S1935. The segment covering 1957 to 1969 (EKQNSNKDMRKND) has biased composition (basic and acidic residues). Composition is skewed to pro residues over residues 2051-2062 (LPPPSPPPPPPS) and 2125-2134 (SLPPPPPTAP). Positions 2135–2145 (SQPAHLLSSSV) are enriched in low complexity. At S2158 the chain carries Phosphoserine. Basic and acidic residues predominate over residues 2158–2167 (SRKETLDSHQ). The interval 2181–2186 (PPTLPK) is interacts with NEBL. 3 positions are modified to phosphoserine: S2198, S2211, and S2252. The segment covering 2205-2243 (ELERSLSDVEIKTTLSKDQKSSLVAESREHTEAKQEVFR) has biased composition (basic and acidic residues). Composition is skewed to polar residues over residues 2251–2263 (LSISSANSLSQTV) and 2282–2292 (SFPSGSEQQSP). The stretch at 2303–2328 (LMIAEEKYRQQREELEKQRRESSCHS) forms a coiled coil. 2 stretches are compositionally biased toward basic and acidic residues: residues 2311 to 2325 (RQQREELEKQRRESS) and 2333 to 2350 (ETQHRSLSEKEKETELQK). Residues 2626–2635 (NFQQTQTQTS) show a composition bias toward polar residues. A compositionally biased stretch (basic and acidic residues) spans 2636 to 2659 (RIEHKELSQPYSEKKCLRDKDKQQ). Residues 2674-2685 (TQKQSSFSSVRE) are compositionally biased toward polar residues. Coiled-coil stretches lie at residues 2696 to 2724 (NILEFLRKREELQQILSRVKQFEADSNKS) and 2751 to 2777 (RVAMENNLEKVKEEIIHIKTQAEEMLV). The segment at 2835 to 2934 (RQVATHSEAA…PSPPRSRSEQ (100 aa)) is disordered. Polar residues-rich tracts occupy residues 2836–2850 (QVATHSEAATHNPAK) and 2891–2903 (KSELSQSPKNNSC). Over residues 2907 to 2916 (LPRRPMEHTS) the composition is skewed to basic and acidic residues. S2987 and S3225 each carry phosphoserine. Positions 3278–3302 (QGNLHNLSKDGLSNGVPRSRPAEFS) are disordered.

The protein belongs to the Xin family. Interacts with ACTN2. Interacts with F-actin. Interacts with NEBL (via SH3 domain). Interacts with Kcna5/Kv1.5 and Scn5a/Nav1.5; the interactions are required for normal action potential configuration in the heart.

It is found in the cell junction. Functionally, protects actin filaments from depolymerization. Required for correct morphology of cell membranes and maturation of intercalated disks of cardiomyocytes via facilitating localization of XIRP1 and CDH2 to the termini of aligned mature cardiomyocytes. Thereby required for correct postnatal heart development and growth regulation that is crucial for overall heart morphology and diastolic function. Required for normal electrical conduction in the heart including formation of the infranodal ventricular conduction system and normal action potential configuration, as a result of its interaction with the cardiac ion channel components Scn5a/Nav1.5 and Kcna5/Kv1.5. Required for regular actin filament spacing of the paracrystalline array in both inner and outer hair cells of the cochlea, thereby required for maintenance of stereocilia morphology. The sequence is that of Xin actin-binding repeat-containing protein 2 from Rattus norvegicus (Rat).